The chain runs to 79 residues: Dolichyl-diphosphooligosaccharide--protein glycosyltransferase subunit TMEM258 (79 aa).

2 helical membrane passes run L18 to M38 and F55 to V75.

The protein belongs to the OST5 family. As to quaternary structure, component of the oligosaccharyltransferase (OST) complex.

It is found in the membrane. The protein operates within protein modification; protein glycosylation. In terms of biological role, subunit of the oligosaccharyl transferase (OST) complex that catalyzes the initial transfer of a defined glycan (Glc(3)Man(9)GlcNAc(2) in eukaryotes) from the lipid carrier dolichol-pyrophosphate to an asparagine residue within an Asn-X-Ser/Thr consensus motif in nascent polypeptide chains, the first step in protein N-glycosylation. N-glycosylation occurs cotranslationally and the complex associates with the Sec61 complex at the channel-forming translocon complex that mediates protein translocation across the endoplasmic reticulum (ER). All subunits are required for a maximal enzyme activity. The sequence is that of Dolichyl-diphosphooligosaccharide--protein glycosyltransferase subunit TMEM258 from Caenorhabditis briggsae.